A 473-amino-acid chain; its full sequence is Siroheme synthase 1 (473 aa).

The interval 1-204 (MDYFPIFCQL…NDHVQADQHV (204 aa)) is precorrin-2 dehydrogenase /sirohydrochlorin ferrochelatase. NAD(+) contacts are provided by residues 22–23 (EI) and 43–44 (CE). Serine 128 carries the post-translational modification Phosphoserine. Positions 216–473 (GEVVLVGAGP…KVTECVAHVG (258 aa)) are uroporphyrinogen-III C-methyltransferase. Proline 225 is an S-adenosyl-L-methionine binding site. The active-site Proton acceptor is aspartate 248. Catalysis depends on lysine 270, which acts as the Proton donor. S-adenosyl-L-methionine is bound by residues 301–303 (GGD), isoleucine 306, 331–332 (TA), methionine 382, and glycine 411.

In the N-terminal section; belongs to the precorrin-2 dehydrogenase / sirohydrochlorin ferrochelatase family. This sequence in the C-terminal section; belongs to the precorrin methyltransferase family.

The enzyme catalyses uroporphyrinogen III + 2 S-adenosyl-L-methionine = precorrin-2 + 2 S-adenosyl-L-homocysteine + H(+). It carries out the reaction precorrin-2 + NAD(+) = sirohydrochlorin + NADH + 2 H(+). The catalysed reaction is siroheme + 2 H(+) = sirohydrochlorin + Fe(2+). It participates in cofactor biosynthesis; adenosylcobalamin biosynthesis; precorrin-2 from uroporphyrinogen III: step 1/1. The protein operates within cofactor biosynthesis; adenosylcobalamin biosynthesis; sirohydrochlorin from precorrin-2: step 1/1. It functions in the pathway porphyrin-containing compound metabolism; siroheme biosynthesis; precorrin-2 from uroporphyrinogen III: step 1/1. Its pathway is porphyrin-containing compound metabolism; siroheme biosynthesis; siroheme from sirohydrochlorin: step 1/1. It participates in porphyrin-containing compound metabolism; siroheme biosynthesis; sirohydrochlorin from precorrin-2: step 1/1. Its function is as follows. Multifunctional enzyme that catalyzes the SAM-dependent methylations of uroporphyrinogen III at position C-2 and C-7 to form precorrin-2 via precorrin-1. Then it catalyzes the NAD-dependent ring dehydrogenation of precorrin-2 to yield sirohydrochlorin. Finally, it catalyzes the ferrochelation of sirohydrochlorin to yield siroheme. The sequence is that of Siroheme synthase 1 from Yersinia pestis (strain Pestoides F).